We begin with the raw amino-acid sequence, 293 residues long: Kallikrein-5 (293 aa).

The signal sequence occupies residues 1–22; it reads MATARPPWMWVLCALITALLLG. Residues 37-49 show a composition bias toward polar residues; the sequence is HPSNTVPSGSNQD. The disordered stretch occupies residues 37 to 68; it reads HPSNTVPSGSNQDLGAGAGEDARSDDSSSRII. Residues 67–290 enclose the Peptidase S1 domain; it reads IINGSDCDMH…FTKWIQETIQ (224 aa). The N-linked (GlcNAc...) asparagine glycan is linked to Asn-69. Cystine bridges form between Cys-73-Cys-206, Cys-93-Cys-109, Cys-178-Cys-279, Cys-185-Cys-251, Cys-217-Cys-231, and Cys-241-Cys-266. Catalysis depends on charge relay system residues His-108 and Asp-153. Residues Asn-173 and Asn-208 are each glycosylated (N-linked (GlcNAc...) asparagine). The active-site Charge relay system is the Ser-245. Asn-252 is a glycosylation site (N-linked (GlcNAc...) asparagine).

The protein belongs to the peptidase S1 family. Kallikrein subfamily. As to quaternary structure, interacts with SPINK9. In terms of tissue distribution, expressed in skin, breast, brain and testis. Expressed at the stratum granulosum of palmar skin.

The protein resides in the secreted. With respect to regulation, inhibited by Zn2+. Its function is as follows. May be involved in desquamation. In Homo sapiens (Human), this protein is Kallikrein-5.